The following is a 389-amino-acid chain: Succinate--CoA ligase [ADP-forming] subunit beta (389 aa).

The 236-residue stretch at 9 to 244 folds into the ATP-grasp domain; it reads KQLLAEYGIP…KTQEDETEVT (236 aa). Residues Lys46, 53–55, Gly102, and Glu107 each bind ATP; that span reads GRG. Positions 199 and 213 each coordinate Mg(2+). Substrate is bound by residues Asn264 and 321–323; that span reads GIV.

This sequence belongs to the succinate/malate CoA ligase beta subunit family. Heterotetramer of two alpha and two beta subunits. Requires Mg(2+) as cofactor.

It catalyses the reaction succinate + ATP + CoA = succinyl-CoA + ADP + phosphate. The enzyme catalyses GTP + succinate + CoA = succinyl-CoA + GDP + phosphate. It functions in the pathway carbohydrate metabolism; tricarboxylic acid cycle; succinate from succinyl-CoA (ligase route): step 1/1. In terms of biological role, succinyl-CoA synthetase functions in the citric acid cycle (TCA), coupling the hydrolysis of succinyl-CoA to the synthesis of either ATP or GTP and thus represents the only step of substrate-level phosphorylation in the TCA. The beta subunit provides nucleotide specificity of the enzyme and binds the substrate succinate, while the binding sites for coenzyme A and phosphate are found in the alpha subunit. The polypeptide is Succinate--CoA ligase [ADP-forming] subunit beta (Xanthomonas oryzae pv. oryzae (strain MAFF 311018)).